We begin with the raw amino-acid sequence, 40 residues long: Photosystem I reaction center subunit IX (40 aa).

The helical transmembrane segment at 12–34 (APVLLTAWMSLTAGMIIEIQRFF) threads the bilayer.

Belongs to the PsaJ family.

It localises to the plastid. It is found in the chloroplast thylakoid membrane. May help in the organization of the PsaE and PsaF subunits. The protein is Photosystem I reaction center subunit IX of Emiliania huxleyi (Coccolithophore).